Consider the following 305-residue polypeptide: Probable 5-dehydro-4-deoxyglucarate dehydratase (305 aa).

The protein belongs to the DapA family.

It catalyses the reaction 5-dehydro-4-deoxy-D-glucarate + H(+) = 2,5-dioxopentanoate + CO2 + H2O. The protein operates within carbohydrate acid metabolism; D-glucarate degradation; 2,5-dioxopentanoate from D-glucarate: step 2/2. The polypeptide is Probable 5-dehydro-4-deoxyglucarate dehydratase (Pseudomonas entomophila (strain L48)).